A 304-amino-acid chain; its full sequence is 4-diphosphocytidyl-2-C-methyl-D-erythritol kinase (304 aa).

K18 is a catalytic residue. 103-113 (PVAAGIGGGSA) is an ATP binding site. D145 is a catalytic residue.

It belongs to the GHMP kinase family. IspE subfamily.

It carries out the reaction 4-CDP-2-C-methyl-D-erythritol + ATP = 4-CDP-2-C-methyl-D-erythritol 2-phosphate + ADP + H(+). It functions in the pathway isoprenoid biosynthesis; isopentenyl diphosphate biosynthesis via DXP pathway; isopentenyl diphosphate from 1-deoxy-D-xylulose 5-phosphate: step 3/6. In terms of biological role, catalyzes the phosphorylation of the position 2 hydroxy group of 4-diphosphocytidyl-2C-methyl-D-erythritol. In Rhodospirillum rubrum (strain ATCC 11170 / ATH 1.1.1 / DSM 467 / LMG 4362 / NCIMB 8255 / S1), this protein is 4-diphosphocytidyl-2-C-methyl-D-erythritol kinase.